Consider the following 348-residue polypeptide: Protein pelota homolog (348 aa).

It belongs to the eukaryotic release factor 1 family. Pelota subfamily. Monomer. A divalent metal cation is required as a cofactor.

The protein localises to the cytoplasm. Its function is as follows. May function in recognizing stalled ribosomes, interact with stem-loop structures in stalled mRNA molecules, and effect endonucleolytic cleavage of the mRNA. May play a role in the release non-functional ribosomes and degradation of damaged mRNAs. Has endoribonuclease activity. This chain is Protein pelota homolog, found in Methanococcus vannielii (strain ATCC 35089 / DSM 1224 / JCM 13029 / OCM 148 / SB).